The following is a 558-amino-acid chain: Membrane protein insertase YidC (558 aa).

Transmembrane regions (helical) follow at residues 3-23, 364-384, 438-458, 477-497, and 508-528; these read IKRT…FDNW, FVGN…AVFF, LPVV…LASV, PYFI…KLNP, and MMFM…GLVL.

The protein belongs to the OXA1/ALB3/YidC family. Type 1 subfamily. Interacts with the Sec translocase complex via SecD. Specifically interacts with transmembrane segments of nascent integral membrane proteins during membrane integration.

Its subcellular location is the cell inner membrane. Functionally, required for the insertion and/or proper folding and/or complex formation of integral membrane proteins into the membrane. Involved in integration of membrane proteins that insert both dependently and independently of the Sec translocase complex, as well as at least some lipoproteins. Aids folding of multispanning membrane proteins. The polypeptide is Membrane protein insertase YidC (Burkholderia pseudomallei (strain 668)).